The primary structure comprises 259 residues: Imidazole glycerol phosphate synthase subunit HisF (259 aa).

Residues Asp11 and Asp130 contribute to the active site.

This sequence belongs to the HisA/HisF family. In terms of assembly, heterodimer of HisH and HisF.

It localises to the cytoplasm. It carries out the reaction 5-[(5-phospho-1-deoxy-D-ribulos-1-ylimino)methylamino]-1-(5-phospho-beta-D-ribosyl)imidazole-4-carboxamide + L-glutamine = D-erythro-1-(imidazol-4-yl)glycerol 3-phosphate + 5-amino-1-(5-phospho-beta-D-ribosyl)imidazole-4-carboxamide + L-glutamate + H(+). The protein operates within amino-acid biosynthesis; L-histidine biosynthesis; L-histidine from 5-phospho-alpha-D-ribose 1-diphosphate: step 5/9. In terms of biological role, IGPS catalyzes the conversion of PRFAR and glutamine to IGP, AICAR and glutamate. The HisF subunit catalyzes the cyclization activity that produces IGP and AICAR from PRFAR using the ammonia provided by the HisH subunit. In Variovorax paradoxus (strain S110), this protein is Imidazole glycerol phosphate synthase subunit HisF.